Here is a 148-residue protein sequence, read N- to C-terminus: 6,7-dimethyl-8-ribityllumazine synthase (148 aa).

Residues F13, 44-46 (ALE), and 73-75 (MVI) each bind 5-amino-6-(D-ribitylamino)uracil. Position 78-79 (78-79 (ET)) interacts with (2S)-2-hydroxy-3-oxobutyl phosphate. The active-site Proton donor is H81. Residue N106 coordinates 5-amino-6-(D-ribitylamino)uracil. (2S)-2-hydroxy-3-oxobutyl phosphate is bound at residue R120.

The protein belongs to the DMRL synthase family.

The catalysed reaction is (2S)-2-hydroxy-3-oxobutyl phosphate + 5-amino-6-(D-ribitylamino)uracil = 6,7-dimethyl-8-(1-D-ribityl)lumazine + phosphate + 2 H2O + H(+). It participates in cofactor biosynthesis; riboflavin biosynthesis; riboflavin from 2-hydroxy-3-oxobutyl phosphate and 5-amino-6-(D-ribitylamino)uracil: step 1/2. Catalyzes the formation of 6,7-dimethyl-8-ribityllumazine by condensation of 5-amino-6-(D-ribitylamino)uracil with 3,4-dihydroxy-2-butanone 4-phosphate. This is the penultimate step in the biosynthesis of riboflavin. This is 6,7-dimethyl-8-ribityllumazine synthase from Agrobacterium fabrum (strain C58 / ATCC 33970) (Agrobacterium tumefaciens (strain C58)).